A 333-amino-acid polypeptide reads, in one-letter code: Homeobox protein Hox-D13 (333 aa).

The tract at residues 1–24 is disordered; the sequence is MDGLRTDGGAAGAAPASSSSSSSV. The segment covering 12–24 has biased composition (low complexity); the sequence is GAAPASSSSSSSV. A DNA-binding region (homeobox) is located at residues 266–325; sequence GRKKRVPYTKLQLKELENEYAINKFINKDKRRRISAATNLSERQVTIWFQNRRVKDKKIV.

This sequence belongs to the Abd-B homeobox family.

It localises to the nucleus. Sequence-specific transcription factor that binds gene promoters and activates their transcription. Part of a developmental regulatory system that provides cells with specific positional identities on the anterior-posterior axis. The protein is Homeobox protein Hox-D13 (HOXD13) of Carollia perspicillata (Seba's short-tailed bat).